We begin with the raw amino-acid sequence, 72 residues long: Long neurotoxin OH-17 (72 aa).

Cystine bridges form between cysteine 3–cysteine 21, cysteine 14–cysteine 42, cysteine 27–cysteine 31, cysteine 46–cysteine 57, and cysteine 58–cysteine 63.

It belongs to the three-finger toxin family. Long-chain subfamily. Type II alpha-neurotoxin sub-subfamily. As to expression, expressed by the venom gland.

Its subcellular location is the secreted. In terms of biological role, binds with high affinity to muscular (alpha-1/CHRNA1) and neuronal (alpha-7/CHRNA7) nicotinic acetylcholine receptor (nAChR) and inhibits acetylcholine from binding to the receptor, thereby impairing neuromuscular and neuronal transmission. The polypeptide is Long neurotoxin OH-17 (Ophiophagus hannah (King cobra)).